The primary structure comprises 164 residues: Phosphopantetheine adenylyltransferase (164 aa).

Threonine 10 serves as a coordination point for substrate. Residues 10 to 11 and histidine 18 contribute to the ATP site; that span reads TF. Substrate-binding residues include lysine 42, threonine 79, and arginine 93. Residues 94-96, glutamate 104, and 129-135 contribute to the ATP site; these read GLR and NQIISSR.

Belongs to the bacterial CoaD family. As to quaternary structure, homohexamer. It depends on Mg(2+) as a cofactor.

The protein resides in the cytoplasm. The catalysed reaction is (R)-4'-phosphopantetheine + ATP + H(+) = 3'-dephospho-CoA + diphosphate. The protein operates within cofactor biosynthesis; coenzyme A biosynthesis; CoA from (R)-pantothenate: step 4/5. Functionally, reversibly transfers an adenylyl group from ATP to 4'-phosphopantetheine, yielding dephospho-CoA (dPCoA) and pyrophosphate. This is Phosphopantetheine adenylyltransferase from Pelagibacter ubique (strain HTCC1062).